Reading from the N-terminus, the 1227-residue chain is Methionine synthase (1227 aa).

Residues 2–325 form the Hcy-binding domain; sequence SSKVEQLRAQ…EHIAAMSRAV (324 aa). Zn(2+) contacts are provided by cysteine 247, cysteine 310, and cysteine 311. The 262-residue stretch at 356-617 folds into the Pterin-binding domain; sequence FVNVGERTNV…LPAELRDAVE (262 aa). Residues 650 to 744 form the B12-binding N-terminal domain; sequence QQAEWRSWDV…FIEASKEKGS (95 aa). Methylcob(III)alamin is bound by residues glutamate 694, 756 to 760, histidine 759, serine 804, threonine 808, and alanine 860; that span reads GDVHD. One can recognise a B12-binding domain in the interval 746–881; that stretch reads NGKMVIATVK…SDTQRDDFVA (136 aa). Positions 897–1227 constitute an AdoMet activation domain; sequence KKPRTPPVTL…LAPNLGYDAD (331 aa). S-adenosyl-L-methionine-binding positions include aspartate 946, arginine 1134, and 1189-1190; that span reads YF.

This sequence belongs to the vitamin-B12 dependent methionine synthase family. Methylcob(III)alamin is required as a cofactor. The cofactor is Zn(2+).

It catalyses the reaction (6S)-5-methyl-5,6,7,8-tetrahydrofolate + L-homocysteine = (6S)-5,6,7,8-tetrahydrofolate + L-methionine. It participates in amino-acid biosynthesis; L-methionine biosynthesis via de novo pathway; L-methionine from L-homocysteine (MetH route): step 1/1. Its function is as follows. Catalyzes the transfer of a methyl group from methyl-cobalamin to homocysteine, yielding enzyme-bound cob(I)alamin and methionine. Subsequently, remethylates the cofactor using methyltetrahydrofolate. This chain is Methionine synthase (metH), found in Salmonella typhimurium (strain LT2 / SGSC1412 / ATCC 700720).